The sequence spans 363 residues: Probable endopolygalacturonase A (363 aa).

An N-terminal signal peptide occupies residues 1–20; sequence MQLLQSSVIAATVGAALVAA. The propeptide occupies 21–28; the sequence is APVELEAR. Residues Cys31 and Cys46 are joined by a disulfide bond. PbH1 repeat units lie at residues 158–187, 188–209, 210–230, 239–260, 268–290, and 302–347; these read SDNL…DIGS, STYI…AINS, GSHI…SIGS, VEDV…RIKT, VSNV…VVEQ, and TNGI…SITG. Residue Asn162 is glycosylated (N-linked (GlcNAc...) asparagine). Asp202 (proton donor) is an active-site residue. Cys204 and Cys220 are oxidised to a cystine. Residue His224 is part of the active site. Intrachain disulfides connect Cys330–Cys335 and Cys354–Cys363.

The protein belongs to the glycosyl hydrolase 28 family.

It is found in the secreted. It carries out the reaction (1,4-alpha-D-galacturonosyl)n+m + H2O = (1,4-alpha-D-galacturonosyl)n + (1,4-alpha-D-galacturonosyl)m.. In terms of biological role, involved in maceration and soft-rotting of plant tissue. Hydrolyzes the 1,4-alpha glycosidic bonds of de-esterified pectate in the smooth region of the plant cell wall. This is Probable endopolygalacturonase A (pgaA) from Aspergillus parasiticus.